Here is a 176-residue protein sequence, read N- to C-terminus: ATP synthase subunit delta (176 aa).

It belongs to the ATPase delta chain family. F-type ATPases have 2 components, F(1) - the catalytic core - and F(0) - the membrane proton channel. F(1) has five subunits: alpha(3), beta(3), gamma(1), delta(1), epsilon(1). F(0) has three main subunits: a(1), b(2) and c(10-14). The alpha and beta chains form an alternating ring which encloses part of the gamma chain. F(1) is attached to F(0) by a central stalk formed by the gamma and epsilon chains, while a peripheral stalk is formed by the delta and b chains.

The protein resides in the cell membrane. In terms of biological role, f(1)F(0) ATP synthase produces ATP from ADP in the presence of a proton or sodium gradient. F-type ATPases consist of two structural domains, F(1) containing the extramembraneous catalytic core and F(0) containing the membrane proton channel, linked together by a central stalk and a peripheral stalk. During catalysis, ATP synthesis in the catalytic domain of F(1) is coupled via a rotary mechanism of the central stalk subunits to proton translocation. This protein is part of the stalk that links CF(0) to CF(1). It either transmits conformational changes from CF(0) to CF(1) or is implicated in proton conduction. The chain is ATP synthase subunit delta from Hamiltonella defensa subsp. Acyrthosiphon pisum (strain 5AT).